Consider the following 131-residue polypeptide: MSAKRVFEKFDKNKDGKLSLDEFREVALAFSPYFTQEDIVKFFEEIDVDGNGELNADEFTSCIEKMLKEVFVFCDVDGDGKIPASESYVTMTSLGKKFTEETSAEKVRAADVDGDGYLNFDEFMALVIGDI.

EF-hand domains are found at residues 1 to 33 (MSAK…FSPY), 34 to 69 (FTQE…MLKE), 70 to 97 (VFVF…LGKK), and 98 to 131 (FTEE…IGDI). Residues Asp11, Asn13, Asp15, Lys17, Glu22, Asp47, Asp49, Asn51, Glu53, and Glu58 each contribute to the Ca(2+) site. Asp111, Asp113, Asp115, Tyr117, and Glu122 together coordinate Ca(2+).

In terms of biological role, potential calcium sensor. This chain is Probable calcium-binding protein CML34 (CML34), found in Arabidopsis thaliana (Mouse-ear cress).